We begin with the raw amino-acid sequence, 1070 residues long: DNA-directed RNA polymerase subunit beta (1070 aa).

Belongs to the RNA polymerase beta chain family. As to quaternary structure, in plastids the minimal PEP RNA polymerase catalytic core is composed of four subunits: alpha, beta, beta', and beta''. When a (nuclear-encoded) sigma factor is associated with the core the holoenzyme is formed, which can initiate transcription.

It is found in the plastid. It catalyses the reaction RNA(n) + a ribonucleoside 5'-triphosphate = RNA(n+1) + diphosphate. Its function is as follows. DNA-dependent RNA polymerase catalyzes the transcription of DNA into RNA using the four ribonucleoside triphosphates as substrates. The polypeptide is DNA-directed RNA polymerase subunit beta (rpoB) (Cuscuta reflexa (Southern Asian dodder)).